Reading from the N-terminus, the 120-residue chain is uncharacterized protein (120 aa).

A signal peptide spans 1–19 (MKKIVCAVVALLLTLPAWA).

This is an uncharacterized protein from Salmonella typhimurium (strain LT2 / SGSC1412 / ATCC 700720).